A 177-amino-acid chain; its full sequence is Large ribosomal subunit protein uL6 (177 aa).

It belongs to the universal ribosomal protein uL6 family. In terms of assembly, part of the 50S ribosomal subunit.

In terms of biological role, this protein binds to the 23S rRNA, and is important in its secondary structure. It is located near the subunit interface in the base of the L7/L12 stalk, and near the tRNA binding site of the peptidyltransferase center. The polypeptide is Large ribosomal subunit protein uL6 (Methylorubrum populi (strain ATCC BAA-705 / NCIMB 13946 / BJ001) (Methylobacterium populi)).